A 97-amino-acid polypeptide reads, in one-letter code: Co-chaperonin GroES (97 aa).

This sequence belongs to the GroES chaperonin family. In terms of assembly, heptamer of 7 subunits arranged in a ring. Interacts with the chaperonin GroEL.

Its subcellular location is the cytoplasm. Its function is as follows. Together with the chaperonin GroEL, plays an essential role in assisting protein folding. The GroEL-GroES system forms a nano-cage that allows encapsulation of the non-native substrate proteins and provides a physical environment optimized to promote and accelerate protein folding. GroES binds to the apical surface of the GroEL ring, thereby capping the opening of the GroEL channel. This chain is Co-chaperonin GroES, found in Blochmanniella floridana.